A 489-amino-acid chain; its full sequence is Valine--tRNA ligase (489 aa).

Positions 482–486 match the 'KMSKS' region motif; that stretch reads KMSKS. Lys-485 lines the ATP pocket.

This sequence belongs to the class-I aminoacyl-tRNA synthetase family.

It carries out the reaction tRNA(Val) + L-valine + ATP = L-valyl-tRNA(Val) + AMP + diphosphate. The protein is Valine--tRNA ligase (VALS) of Trichomonas vaginalis.